A 293-amino-acid polypeptide reads, in one-letter code: Iron-sulfur cluster transfer protein Nubpl (293 aa).

Positions 214–217 (CQNC) are CXXC motif probably involved in coordinating iron-sulfur cluster binding.

It belongs to the Mrp/NBP35 ATP-binding proteins family. As to quaternary structure, homodimer; dimerization is not reliant on iron-sulfur cluster binding. [4Fe-4S] cluster is required as a cofactor.

It localises to the mitochondrion membrane. Its function is as follows. Iron-sulfur cluster transfer protein involved in the assembly of the mitochondrial membrane respiratory chain NADH dehydrogenase (Complex I). May deliver one or more Fe-S clusters to complex I subunits. Alleviates pausing in mitochondrial DNA (mtDNA) replication at slow zone 2. May be involved in mtDNA-helicase-mediated mtDNA unwinding and replication by transferring iron-sulfur clusters. The protein is Iron-sulfur cluster transfer protein Nubpl of Drosophila melanogaster (Fruit fly).